Reading from the N-terminus, the 262-residue chain is 3-methyl-2-oxobutanoate hydroxymethyltransferase (262 aa).

Asp-31 and Asp-70 together coordinate Mg(2+). 3-methyl-2-oxobutanoate contacts are provided by residues 31–32 (DS), Asp-70, and Lys-99. Glu-101 is a binding site for Mg(2+). The active-site Proton acceptor is Glu-168.

This sequence belongs to the PanB family. Homodecamer; pentamer of dimers. Mg(2+) serves as cofactor.

Its subcellular location is the cytoplasm. It catalyses the reaction 3-methyl-2-oxobutanoate + (6R)-5,10-methylene-5,6,7,8-tetrahydrofolate + H2O = 2-dehydropantoate + (6S)-5,6,7,8-tetrahydrofolate. It functions in the pathway cofactor biosynthesis; coenzyme A biosynthesis. Catalyzes the reversible reaction in which hydroxymethyl group from 5,10-methylenetetrahydrofolate is transferred onto alpha-ketoisovalerate to form ketopantoate. The chain is 3-methyl-2-oxobutanoate hydroxymethyltransferase from Cenarchaeum symbiosum (strain A).